A 1033-amino-acid polypeptide reads, in one-letter code: Ubiquitin carboxyl-terminal hydrolase 48 (1033 aa).

In terms of domain architecture, USP spans 89–419 (VGLTNLGATC…NAYMLVYRLQ (331 aa)). Residue Cys-98 is the Nucleophile of the active site. His-351 functions as the Proton acceptor in the catalytic mechanism. DUSP domains are found at residues 457-552 (QSVA…KALC), 567-690 (NQLN…NKEC), and 710-823 (MMAS…RTRA). Residues 610–639 (EQDEDAEHSNGKLNGNAPNKDEVNEEKREE) are disordered. The segment at 878–920 (APELNVSSSEAEEEREENKPEGEQDPDFNQSNGGAKRQKLSHQ) is disordered. A Ubiquitin-like domain is found at 931–1007 (RRSTRHRKVR…ILLKADEPIA (77 aa)).

This sequence belongs to the peptidase C19 family.

It localises to the cytoplasm. The protein localises to the nucleus. It catalyses the reaction Thiol-dependent hydrolysis of ester, thioester, amide, peptide and isopeptide bonds formed by the C-terminal Gly of ubiquitin (a 76-residue protein attached to proteins as an intracellular targeting signal).. In terms of biological role, recognizes and hydrolyzes the peptide bond at the C-terminal Gly of ubiquitin. Involved in the processing of poly-ubiquitin precursors as well as that of ubiquitinated proteins. The polypeptide is Ubiquitin carboxyl-terminal hydrolase 48 (USP48) (Gallus gallus (Chicken)).